We begin with the raw amino-acid sequence, 212 residues long: Thymidine kinase (212 aa).

Residues 16-23 (GPMFSGKS) and 99-102 (DEAQ) each bind ATP. Glutamate 100 functions as the Proton acceptor in the catalytic mechanism.

The protein belongs to the thymidine kinase family. As to quaternary structure, homotetramer.

It localises to the cytoplasm. The enzyme catalyses thymidine + ATP = dTMP + ADP + H(+). The chain is Thymidine kinase from Deinococcus radiodurans (strain ATCC 13939 / DSM 20539 / JCM 16871 / CCUG 27074 / LMG 4051 / NBRC 15346 / NCIMB 9279 / VKM B-1422 / R1).